The sequence spans 422 residues: 3-phosphoshikimate 1-carboxyvinyltransferase (422 aa).

Residues Lys-20, Ser-21, and Arg-25 each contribute to the 3-phosphoshikimate site. Lys-20 is a phosphoenolpyruvate binding site. Phosphoenolpyruvate-binding residues include Gly-92 and Arg-120. 3-phosphoshikimate contacts are provided by Ser-163, Ser-164, Gln-165, Ser-191, Asp-304, and Lys-331. Residue Gln-165 coordinates phosphoenolpyruvate. The active-site Proton acceptor is Asp-304. Residues Arg-335 and Arg-377 each contribute to the phosphoenolpyruvate site.

This sequence belongs to the EPSP synthase family. In terms of assembly, monomer.

The protein resides in the cytoplasm. The enzyme catalyses 3-phosphoshikimate + phosphoenolpyruvate = 5-O-(1-carboxyvinyl)-3-phosphoshikimate + phosphate. The protein operates within metabolic intermediate biosynthesis; chorismate biosynthesis. Its function is as follows. Catalyzes the transfer of the enolpyruvyl moiety of phosphoenolpyruvate (PEP) to the 5-hydroxyl of shikimate-3-phosphate (S3P) to produce enolpyruvyl shikimate-3-phosphate and inorganic phosphate. The sequence is that of 3-phosphoshikimate 1-carboxyvinyltransferase from Methanocorpusculum labreanum (strain ATCC 43576 / DSM 4855 / Z).